Consider the following 403-residue polypeptide: DNA polymerase IV (403 aa).

The UmuC domain occupies 23-203 (IAHMDCDAFY…KPVNILPGVG (181 aa)). Residues aspartate 27 and aspartate 120 each coordinate Mg(2+). Glutamate 121 is an active-site residue.

It belongs to the DNA polymerase type-Y family. In terms of assembly, monomer. It depends on Mg(2+) as a cofactor.

It is found in the cytoplasm. It catalyses the reaction DNA(n) + a 2'-deoxyribonucleoside 5'-triphosphate = DNA(n+1) + diphosphate. Functionally, poorly processive, error-prone DNA polymerase involved in untargeted mutagenesis. Copies undamaged DNA at stalled replication forks, which arise in vivo from mismatched or misaligned primer ends. These misaligned primers can be extended by PolIV. Exhibits no 3'-5' exonuclease (proofreading) activity. May be involved in translesional synthesis, in conjunction with the beta clamp from PolIII. In Caulobacter vibrioides (strain ATCC 19089 / CIP 103742 / CB 15) (Caulobacter crescentus), this protein is DNA polymerase IV.